The following is a 325-amino-acid chain: MFFDSVTNGPEDVMYQVKAACDSDNDPSKIDLGVGTYRNEDGDYHELDVLKEIATVQTISGTGAIHIGAMFLARSATDVLPHVYVGTPTWGNYQPLLRLAGLEMRTYNHYLSQTGRVDFASVLSAIRTTPRGSTFILQGCCHNPTAADFSREQWDIVVAEMESHGHLPFFDIAYQGLGEGVDEDVYGVRLCADKGMEMVVCQSFAKNFGLYGERCGALHVVCTSDDVAARVKDQLRCLIRWEFSSSPAYGARLVNLVLSDARAEEQCLLPLSKTQCQELQNKFRIYAVPNGRITMSGLSQGNIDYAARAIDAVVRSGLEAREPTG.

Substrate is bound at residue Gly35. Residues 89 to 90 (TW), Asn143, Tyr174, and 203 to 205 (SFA) each bind pyridoxal 5'-phosphate. Position 143 (Asn143) interacts with substrate. Lys206 carries the post-translational modification N6-(pyridoxal phosphate)lysine. Position 214 (Arg214) interacts with pyridoxal 5'-phosphate.

Belongs to the class-I pyridoxal-phosphate-dependent aminotransferase family. Homodimer. It depends on pyridoxal 5'-phosphate as a cofactor.

The protein operates within secondary metabolite biosynthesis. Its function is as follows. Aminotransferase; part of the gene cluster that mediates the biosynthesis of the tetramic acids Sch210971 and Sch210972, potential anti-HIV fungal natural product that contain a decalin core. The PKS module of tasS together with the enoylreductase tasC catalyze the formation of the polyketide unit which is then conjugated to 4-hydroxyl-4-methyl glutamate (HMG) by the condensation domain of the tasS NRPS module. One unique structural feature of Sch210971 and Sch210972 is the tetramic acid motif proposed to be derived from the non-proteinogenic amino acid HMG, by a Dieckmann-type condensation catalyzed by the reductase domain of tasS. The aldolase tasA catalyzes the aldol condensation of 2 molecules of pyruvic acid to yield the intermediate 4-hydroxyl-4-methyl-2-oxoglutarate (HMOG), which can then be stereoselectively transaminated, may be by tasG, to form HMG. The Diels-Alderase tas3 then uses the Dieckmann product of tasS as substrate and catalyzes the Diels-Alder cycloaddition to form the decalin ring of Sch210971 and Sch210972. This is Aminotransferase tasG from Hapsidospora irregularis.